Here is a 285-residue protein sequence, read N- to C-terminus: MVAKILDGKQIAKDYRQGLKDQVEALQAEGYTPKLSVILVGNDGASQSYVNSKKKAAEKIGMISEIVHLDESTSEADVLNELKRLNEDDSVSGILVQVPLPDQVSEQKVLESINPAKDVDGFHPENIGKLYIDQQTFVPCTPLGIMELLNHADIDLEGKDAVVIGRSHIVGQPVSKLLLQKNASVTILHSRTKDMKRYLKNADIIVSAVGRPGLVTKEDVKEGAVVIDVGNTPDENGKLKGDIEYDEVKEVAGAITPVPGGVGPMTITMVLNNTLIAEKMRRGIE.

NADP(+) contacts are provided by residues 165–167 (GRS) and Ser-190.

This sequence belongs to the tetrahydrofolate dehydrogenase/cyclohydrolase family. Homodimer.

It catalyses the reaction (6R)-5,10-methylene-5,6,7,8-tetrahydrofolate + NADP(+) = (6R)-5,10-methenyltetrahydrofolate + NADPH. It carries out the reaction (6R)-5,10-methenyltetrahydrofolate + H2O = (6R)-10-formyltetrahydrofolate + H(+). It participates in one-carbon metabolism; tetrahydrofolate interconversion. Catalyzes the oxidation of 5,10-methylenetetrahydrofolate to 5,10-methenyltetrahydrofolate and then the hydrolysis of 5,10-methenyltetrahydrofolate to 10-formyltetrahydrofolate. In Staphylococcus saprophyticus subsp. saprophyticus (strain ATCC 15305 / DSM 20229 / NCIMB 8711 / NCTC 7292 / S-41), this protein is Bifunctional protein FolD.